The chain runs to 470 residues: Hydroxymethylglutaryl-CoA synthase (470 aa).

Glutamate 100 acts as the Proton donor/acceptor in catalysis. Cysteine 134 serves as the catalytic Acyl-thioester intermediate. Residues cysteine 134, threonine 176, serine 225, histidine 269, lysine 278, asparagine 348, and serine 382 each contribute to the (3S)-3-hydroxy-3-methylglutaryl-CoA site. Histidine 269 (proton donor/acceptor) is an active-site residue.

It belongs to the thiolase-like superfamily. HMG-CoA synthase family.

It catalyses the reaction acetoacetyl-CoA + acetyl-CoA + H2O = (3S)-3-hydroxy-3-methylglutaryl-CoA + CoA + H(+). It functions in the pathway metabolic intermediate biosynthesis; (R)-mevalonate biosynthesis; (R)-mevalonate from acetyl-CoA: step 2/3. Its function is as follows. Hydroxymethylglutaryl-CoA synthase; part of the first module of ergosterol biosynthesis pathway that includes the early steps of the pathway, conserved across all eukaryotes, and which results in the formation of mevalonate from acetyl-coenzyme A (acetyl-CoA). This module also plays a key role in the biosynthesis of triterpenes such as ganoderic acids (GA), a group of highly oxygenated lanostane-type triterpenoids which are well recognized as a main group of unique bioactive compounds in the medicinal mushroom Ganoderma lucidum. In this module, the acetyl-CoA acetyltransferase catalyzes the formation of acetoacetyl-CoA. The hydroxymethylglutaryl-CoA synthase HMGS then condenses acetyl-CoA with acetoacetyl-CoA to form HMG-CoA. The rate-limiting step of the early module is the reduction to mevalonate by the 3-hydroxy-3-methylglutaryl-coenzyme A (HMG-CoA) reductase. This chain is Hydroxymethylglutaryl-CoA synthase, found in Ganoderma lucidum (Ling zhi medicinal fungus).